The sequence spans 399 residues: Glycerol-1-phosphate dehydrogenase [NAD(P)+] (399 aa).

NAD(+) is bound by residues aspartate 56, 118-122 (GTIHD), and 140-143 (TAPS). Position 145 (aspartate 145) interacts with substrate. NAD(+) is bound at residue serine 149. Residue aspartate 192 coordinates substrate. Residues aspartate 192 and histidine 272 each coordinate Ni(2+). Histidine 276 provides a ligand contact to substrate. Histidine 292 lines the Ni(2+) pocket.

It belongs to the glycerol-1-phosphate dehydrogenase family. In terms of assembly, homodimer. Ni(2+) serves as cofactor.

It is found in the cytoplasm. It catalyses the reaction sn-glycerol 1-phosphate + NAD(+) = dihydroxyacetone phosphate + NADH + H(+). The catalysed reaction is sn-glycerol 1-phosphate + NADP(+) = dihydroxyacetone phosphate + NADPH + H(+). Functionally, catalyzes the NAD(P)H-dependent reduction of dihydroxyacetonephosphate (DHAP or glycerone phosphate) to glycerol 1-phosphate (G1P). The G1P thus generated is probably used for the synthesis of phosphoglycerolipids in Gram-positive bacterial species. The polypeptide is Glycerol-1-phosphate dehydrogenase [NAD(P)+] (Halalkalibacterium halodurans (strain ATCC BAA-125 / DSM 18197 / FERM 7344 / JCM 9153 / C-125) (Bacillus halodurans)).